Consider the following 143-residue polypeptide: Transcriptional regulator MraZ (143 aa).

SpoVT-AbrB domains lie at 5–47 and 76–119; these read EYTH…PLIE and ACEC…DAER.

The protein belongs to the MraZ family. Forms oligomers.

The protein resides in the cytoplasm. The protein localises to the nucleoid. In Limosilactobacillus fermentum (strain NBRC 3956 / LMG 18251) (Lactobacillus fermentum), this protein is Transcriptional regulator MraZ.